The chain runs to 757 residues: Mitofusin-2 (757 aa).

The Cytoplasmic segment spans residues 1-604 (MSLLFSRCNS…TQEELMVSMV (604 aa)). The segment at 30–94 (KHFVTAKKKI…VRGISEVLAR (65 aa)) is part of a helix bundle domain, formed by helices from N-terminal and C-terminal regions. Residues 93 to 342 (ARRHMKVAFF…VRMFEFQNFE (250 aa)) enclose the Dynamin-type G domain. Residues 103-110 (GRTSNGKS) are G1 motif. 106-111 (SNGKST) lines the GTP pocket. Residue Thr-111 is modified to Phosphothreonine; by PINK1. A G2 motif region spans residues 129 to 130 (TT). Residues 199 to 202 (DSPG) are G3 motif. 258–261 (NRWD) contacts GTP. Residues 258 to 261 (NRWD) are G4 motif. Glu-288 is a region of interest (G5 motif). Positions 305 and 307 each coordinate GTP. Residues 359-385 (EQHTVRAKQIAEAVRLIMDSLHIAAQE) are part of a helix bundle domain, formed by helices from N-terminal and C-terminal regions. Positions 406-434 (KQLELLAQDYKLRIKQITEEVERQVSTAM) form a coiled coil. Ser-442 carries the post-translational modification Phosphoserine. Residues 605-625 (TGLASLTSRTSMGILVVGGVV) traverse the membrane as a helical segment. Position 626 (Trp-626) is a topological domain, mitochondrial intermembrane. A helical transmembrane segment spans residues 627–647 (KAVGWRLIALSFGLYGLLYVY). Residues 648–757 (ERLTWTTKAK…FTHQYLQPSR (110 aa)) lie on the Cytoplasmic side of the membrane. Positions 696–738 (FAHLCQQVDITRDNLEQEIAAMNKKVEALDSLQSRAKLLRNKA) form a coiled coil. Positions 722–753 (EALDSLQSRAKLLRNKAGWLDSELNMFTHQYL) are part of a helix bundle domain, formed by helices from N-terminal and C-terminal regions.

The protein belongs to the TRAFAC class dynamin-like GTPase superfamily. Dynamin/Fzo/YdjA family. Mitofusin subfamily. Forms homomultimers and heteromultimers with MFN1. Oligomerization is essential for mitochondrion fusion. Interacts with VAT1. Interacts with STOML2; may form heterooligomers. Interacts (phosphorylated) with PRKN. Interacts with EIF2AK3. Interacts with THG1L; THG1L probably functions as a guanyl-nucleotide exchange factor/GEF, activating MFN2. In terms of processing, phosphorylated by PINK1. Ubiquitinated by non-degradative ubiquitin by PRKN, promoting mitochondrial fusion; deubiquitination by USP30 inhibits mitochondrial fusion. Ubiquitinated by HUWE1 when dietary stearate (C18:0) levels are low; ubiquitination inhibits mitochondrial fusion. As to expression, ubiquitous. Expression is markedly reduced in ApoE-knockout mouse atherosclerotic arteries.

Its subcellular location is the mitochondrion outer membrane. It catalyses the reaction GTP + H2O = GDP + phosphate + H(+). In terms of biological role, mitochondrial outer membrane GTPase that mediates mitochondrial clustering and fusion. Mitochondria are highly dynamic organelles, and their morphology is determined by the equilibrium between mitochondrial fusion and fission events. Overexpression induces the formation of mitochondrial networks. Membrane clustering requires GTPase activity and may involve a major rearrangement of the coiled coil domains. Plays a central role in mitochondrial metabolism and may be associated with obesity and/or apoptosis processes. Plays an important role in the regulation of vascular smooth muscle cell proliferation. Involved in the clearance of damaged mitochondria via selective autophagy (mitophagy). Is required for PRKN recruitment to dysfunctional mitochondria. Involved in the control of unfolded protein response (UPR) upon ER stress including activation of apoptosis and autophagy during ER stress. Acts as an upstream regulator of EIF2AK3 and suppresses EIF2AK3 activation under basal conditions. This is Mitofusin-2 (Mfn2) from Mus musculus (Mouse).